The chain runs to 168 residues: Protein DESIGUAL 2 (168 aa).

A signal peptide spans 1–20 (MARNVGFFICILILAMDVSA). Helical transmembrane passes span 56–76 (LAACILLVLAHVTANFLGGCL), 94–114 (AVASLIFTWIILAIAFSMLIV), and 133–153 (VLSIGGILCFVHGLFAVAYYI).

Belongs to the DESIGUAL family. In terms of tissue distribution, mainly expressed in roots, inflorescences and developing leaves, and, at low levels, in mature leaves.

The protein resides in the endoplasmic reticulum membrane. Functionally, involved, partially redundantly with VCC/DEAL1 and DEAL3, to ensure bilateral symmetry development and early leaf margin patterning, probably via the regulation of auxin and CUC2 distribution. The chain is Protein DESIGUAL 2 from Arabidopsis thaliana (Mouse-ear cress).